A 424-amino-acid chain; its full sequence is MFRQDALENRKMKWQGRAILLPGIPLWLIMLGSIVFITAFLMFIIVGTYSRRVNVSGEVTTWPRAVNIYSGVQGFVVRQFVHEGQLIKKGDPVYLIDISKSTRSGIVTDNHRRDIENQLVRVDNIISRLEESKKITLDTLEKQRLQYTDAFRRSSDIIQRAEEGIKIMKNNMENYRNYQAKGLINKDQLTNQVALYYQQQNNLLSLSGQNEQNALQITTLESQIQTQAADFDNRIYQMELQRYELQKELVNTDVEGEIIIRALTDGKVDSLSVTVGQMVNTGDSLLQVIPENIENYYLILWVPNDAVPYISAGDKVNIRYEAFPAEKFGQFSATVKTISRTPASTQEMLTYKGAPQNTPGASVPWYKVIAMPEKQIIRYDEKYLPLENGMKAESTLFLEKRRIYQWMLSPFYDMKHSATGPLND.

At 1-25 (MFRQDALENRKMKWQGRAILLPGIP) the chain is on the cytoplasmic side. The chain crosses the membrane as a helical span at residues 26 to 46 (LWLIMLGSIVFITAFLMFIIV). Topologically, residues 47-424 (GTYSRRVNVS…KHSATGPLND (378 aa)) are periplasmic.

Belongs to the membrane fusion protein (MFP) (TC 8.A.1) family.

It localises to the cell inner membrane. Probably involved, in conjunction with MchF, in the secretion of microcin H47. This is Microcin H47 secretion protein MchE (mchE) from Escherichia coli.